A 1147-amino-acid chain; its full sequence is Disease resistance protein RPP4 (1147 aa).

The TIR domain maps to 11–175 (RRYDVFPSFS…KIANDVSNKL (165 aa)). Residue Glu86 is part of the active site. The 258-residue stretch at 189–446 (EDHIKAIKSI…CFFNGFKVSN (258 aa)) folds into the NB-ARC domain. LRR repeat units follow at residues 548–573 (MRNL…LWSK), 584–606 (PLKL…TFKA), 608–629 (YLVN…TLPL), 630–653 (GSLK…SLAI), 655–676 (LEEL…IQNA), 698–721 (MCNL…IYLP), 722–743 (RKLK…NFKA), 744–766 (EYLV…TQPL), 767–790 (GSLK…SLAI), 792–813 (LERL…IQNA), 814–836 (TKLI…DLNL), 837–860 (ESLE…KMGC), 926–950 (LGSL…SKAT), 952–973 (LKRL…IGNL), 974–996 (HRLV…DVNL), 997–1017 (SSLI…PLIS), 1018–1042 (TRIE…DLTR), and 1044–1064 (SVLL…IFRL).

In terms of assembly, interacts with RSH1.

The enzyme catalyses NAD(+) + H2O = ADP-D-ribose + nicotinamide + H(+). In terms of biological role, TIR-NB-LRR receptor-like protein that confers resistance to the pathogen Hyaloperonospora arabidopsis isolates Emoy2 and Emwa1 (downy mildew disease). Plays a role in the regulation of temperature response during plant growth and survival. The polypeptide is Disease resistance protein RPP4 (Arabidopsis thaliana (Mouse-ear cress)).